We begin with the raw amino-acid sequence, 493 residues long: Galactose-1-phosphate uridylyltransferase (493 aa).

This sequence belongs to the galactose-1-phosphate uridylyltransferase type 2 family.

The protein resides in the cytoplasm. It carries out the reaction alpha-D-galactose 1-phosphate + UDP-alpha-D-glucose = alpha-D-glucose 1-phosphate + UDP-alpha-D-galactose. It participates in carbohydrate metabolism; galactose metabolism. This Streptococcus thermophilus (strain CNRZ 1066) protein is Galactose-1-phosphate uridylyltransferase.